A 101-amino-acid polypeptide reads, in one-letter code: uncharacterized protein (101 aa).

A helical transmembrane segment spans residues 72–94 (ILCPSFLNYSFINIYCFGPYTMV).

It is found in the membrane. This is an uncharacterized protein from Schizosaccharomyces pombe (strain 972 / ATCC 24843) (Fission yeast).